Here is a 76-residue protein sequence, read N- to C-terminus: Conotoxin Bu28 (76 aa).

An N-terminal signal peptide occupies residues 1-24 (MTSVQSATCCCLLWLVLCVQLVTP). The propeptide occupies 25 to 39 (DSPATAQLSRHLTAR). 2 disulfide bridges follow: Cys50–Cys63 and Cys54–Cys65. Arg69 is modified (arginine amide). Residues 71–76 (VVSSSI) constitute a propeptide that is removed on maturation.

It belongs to the conotoxin J superfamily. Expressed by the venom duct.

The protein localises to the secreted. Functionally, highly inhibits both nicotinic acetylcholine receptors (neuronal (alpha-3/beta-4) and muscular (alpha-1/beta-1/epsilon/delta) subtypes) and the voltage-gated potassium channel Kv1.6/KCNA6 subtype. In Conus bullatus (Bubble cone), this protein is Conotoxin Bu28.